Reading from the N-terminus, the 1683-residue chain is Phospholipase D1 (1683 aa).

Disordered stretches follow at residues 1-150 (MSNV…AYTQ), 173-198 (LKSS…QQVN), 259-289 (ILDI…SIPR), and 384-416 (VMEK…NITS). Position 2 is an N-acetylserine (S2). S8 and S30 each carry phosphoserine. Basic and acidic residues-rich tracts occupy residues 20 to 34 (SVTE…RPDE), 63 to 82 (NGKE…DRNL), and 90 to 112 (SLDH…ENMH). Residues 116 to 125 (NNLHSSNNNV) are compositionally biased toward low complexity. The span at 141-150 (RRSSSVAYTQ) shows a compositional bias: polar residues. At S145 the chain carries Phosphoserine. Residues 263 to 279 (TNSNHNHRGNNNNNTGE) are compositionally biased toward low complexity. Positions 291–487 (SSIISISSNV…EFYELSPLGN (197 aa)) constitute a PX domain. Positions 392-404 (KPSSAASAPHTSE) are enriched in polar residues. Over residues 405–416 (NNNNDNGSNITS) the composition is skewed to low complexity. Residues 496 to 664 (QGKQGYLVIR…SSIIKMSTST (169 aa)) form the PH domain. PLD phosphodiesterase domains are found at residues 791 to 818 (YFWA…CYGR) and 1091 to 1118 (EQLY…NERS). Active-site residues include H796, K798, D803, H1096, K1098, and D1103. The disordered stretch occupies residues 1430-1465 (KDMRRHLSSSTESTRNGSNSLPLNEKSNEGESTNVD). Positions 1437–1451 (SSSTESTRNGSNSLP) are enriched in polar residues. S1461 bears the Phosphoserine mark. T1462 carries the post-translational modification Phosphothreonine.

It belongs to the phospholipase D family. As to quaternary structure, interacts with SRF1.

It catalyses the reaction a 1,2-diacyl-sn-glycero-3-phosphocholine + H2O = a 1,2-diacyl-sn-glycero-3-phosphate + choline + H(+). With respect to regulation, activity is dependent of phosphatidylinositol 4,5-bisphosphate and the regulator SRF1. Inhibited by magnesium. In terms of biological role, required for meiosis and spore formation. Seems to be involved in the coordinate induction of late meiotic events. PLD activity is induced under sporulation conditions and seems to be necessary to complete the meiotic cycle, but not for vegetative cell growth. This is Phospholipase D1 (SPO14) from Saccharomyces cerevisiae (strain ATCC 204508 / S288c) (Baker's yeast).